The primary structure comprises 504 residues: Pentatricopeptide repeat-containing protein At5g16640, mitochondrial (504 aa).

The N-terminal 43 residues, 1-43 (MRRSISSKAKSFLHRNLLYSGNSGTSPSSSFSICGFCFSRRAY), are a transit peptide targeting the mitochondrion. PPR repeat units follow at residues 45-79 (NGSD…RPLP), 80-114 (SIAD…GIPH), 115-149 (NLCT…GHEP), 150-184 (SIVT…GYKP), 185-219 (NVVI…GIGP), 220-254 (DVVT…EIYP), 255-289 (DVFT…SLDP), 290-324 (DIVT…GCFP), 325-359 (DVVT…GVVR), 360-394 (NTVT…GVHP), 395-429 (NIIT…GMDA), 430-464 (DIVT…GLMP), and 465-499 (DIWT…GILP).

The protein belongs to the PPR family. P subfamily.

The protein resides in the mitochondrion. This chain is Pentatricopeptide repeat-containing protein At5g16640, mitochondrial, found in Arabidopsis thaliana (Mouse-ear cress).